Consider the following 120-residue polypeptide: Ribonuclease P protein component (120 aa).

Belongs to the RnpA family. Consists of a catalytic RNA component (M1 or rnpB) and a protein subunit.

It carries out the reaction Endonucleolytic cleavage of RNA, removing 5'-extranucleotides from tRNA precursor.. Its function is as follows. RNaseP catalyzes the removal of the 5'-leader sequence from pre-tRNA to produce the mature 5'-terminus. It can also cleave other RNA substrates such as 4.5S RNA. The protein component plays an auxiliary but essential role in vivo by binding to the 5'-leader sequence and broadening the substrate specificity of the ribozyme. The protein is Ribonuclease P protein component of Acidothermus cellulolyticus (strain ATCC 43068 / DSM 8971 / 11B).